A 172-amino-acid chain; its full sequence is Large ribosomal subunit protein uL10 (172 aa).

This sequence belongs to the universal ribosomal protein uL10 family. Part of the ribosomal stalk of the 50S ribosomal subunit. The N-terminus interacts with L11 and the large rRNA to form the base of the stalk. The C-terminus forms an elongated spine to which L12 dimers bind in a sequential fashion forming a multimeric L10(L12)X complex.

In terms of biological role, forms part of the ribosomal stalk, playing a central role in the interaction of the ribosome with GTP-bound translation factors. This is Large ribosomal subunit protein uL10 (rplJ) from Liberibacter africanus subsp. capensis.